The chain runs to 469 residues: 6-phospho-beta-galactosidase (469 aa).

The D-galactose 6-phosphate site is built by Q18, H115, N158, E159, and N296. E159 acts as the Proton donor in catalysis. The active-site Nucleophile is the E374. D-galactose 6-phosphate-binding residues include S429, W430, K436, and Y438.

Belongs to the glycosyl hydrolase 1 family.

It carries out the reaction a 6-phospho-beta-D-galactoside + H2O = D-galactose 6-phosphate + an alcohol. It participates in carbohydrate metabolism; lactose degradation; D-galactose 6-phosphate and beta-D-glucose from lactose 6-phosphate: step 1/1. In Staphylococcus haemolyticus (strain JCSC1435), this protein is 6-phospho-beta-galactosidase.